Consider the following 304-residue polypeptide: UDP-3-O-acyl-N-acetylglucosamine deacetylase (304 aa).

Zn(2+) is bound by residues H79, H238, and D242. Residue H265 is the Proton donor of the active site.

The protein belongs to the LpxC family. Requires Zn(2+) as cofactor.

It carries out the reaction a UDP-3-O-[(3R)-3-hydroxyacyl]-N-acetyl-alpha-D-glucosamine + H2O = a UDP-3-O-[(3R)-3-hydroxyacyl]-alpha-D-glucosamine + acetate. It participates in glycolipid biosynthesis; lipid IV(A) biosynthesis; lipid IV(A) from (3R)-3-hydroxytetradecanoyl-[acyl-carrier-protein] and UDP-N-acetyl-alpha-D-glucosamine: step 2/6. In terms of biological role, catalyzes the hydrolysis of UDP-3-O-myristoyl-N-acetylglucosamine to form UDP-3-O-myristoylglucosamine and acetate, the committed step in lipid A biosynthesis. This is UDP-3-O-acyl-N-acetylglucosamine deacetylase from Laribacter hongkongensis (strain HLHK9).